Here is a 157-residue protein sequence, read N- to C-terminus: Protein Smg (157 aa).

Belongs to the Smg family.

In Shigella boydii serotype 18 (strain CDC 3083-94 / BS512), this protein is Protein Smg.